We begin with the raw amino-acid sequence, 1137 residues long: AP-4 complex subunit epsilon-1 (1137 aa).

Ser700 and Ser857 each carry phosphoserine. The segment at 727 to 1137 (SGALPVPQES…YQCQKVMEGS (411 aa)) is interaction with TEPSIN.

Belongs to the adaptor complexes large subunit family. As to quaternary structure, adaptor protein complex 4 (AP-4) is a heterotetramer composed of two large adaptins (epsilon-type subunit AP4E1 and beta-type subunit AP4B1), a medium adaptin (mu-type subunit AP4M1) and a small adaptin (sigma-type AP4S1). Interacts with TEPSIN. Interacts with GRIA2; probably indirect it mediates the somatodendritic localization of GRIA2 in neurons. In terms of tissue distribution, widely expressed.

Its subcellular location is the golgi apparatus. The protein localises to the trans-Golgi network membrane. Its function is as follows. Component of the adaptor protein complex 4 (AP-4). Adaptor protein complexes are vesicle coat components involved both in vesicle formation and cargo selection. They control the vesicular transport of proteins in different trafficking pathways. AP-4 forms a non clathrin-associated coat on vesicles departing the trans-Golgi network (TGN) and may be involved in the targeting of proteins from the trans-Golgi network (TGN) to the endosomal-lysosomal system. It is also involved in protein sorting to the basolateral membrane in epithelial cells and the proper asymmetric localization of somatodendritic proteins in neurons. AP-4 is involved in the recognition and binding of tyrosine-based sorting signals found in the cytoplasmic part of cargos, but may also recognize other types of sorting signal. This chain is AP-4 complex subunit epsilon-1, found in Homo sapiens (Human).